The primary structure comprises 281 residues: MKQKIIKVGNIDVANDRPFVLFGGMNVLESRDMAMRVVETYVEATTALNIPYVFKASFDKANRSSIHSYRGPGLEEGLRIFEEIKNTFNVPIITDVHEPSQAAPVAEVVDVIQLPAFLSRQTDLVKAMAETNAVINVKKAQFLAPHEMKHIITKFNEAGNDNIILCERGSCFGYNNLVVDMLGFSTMKETGYPVIFDVTHSLQKPGARSDSADGRRSQVVQLGLAGMSQGIAGLFLESHPDPANAKCDGPCALPLHQLKAFLSQMKQMDELAKSFDIIDTE.

Belongs to the KdsA family.

The protein localises to the cytoplasm. The enzyme catalyses D-arabinose 5-phosphate + phosphoenolpyruvate + H2O = 3-deoxy-alpha-D-manno-2-octulosonate-8-phosphate + phosphate. It participates in carbohydrate biosynthesis; 3-deoxy-D-manno-octulosonate biosynthesis; 3-deoxy-D-manno-octulosonate from D-ribulose 5-phosphate: step 2/3. It functions in the pathway bacterial outer membrane biogenesis; lipopolysaccharide biosynthesis. In Psychromonas ingrahamii (strain DSM 17664 / CCUG 51855 / 37), this protein is 2-dehydro-3-deoxyphosphooctonate aldolase.